Here is a 420-residue protein sequence, read N- to C-terminus: F-box/LRR-repeat protein At2g43260 (420 aa).

The F-box domain occupies 7–53 (NPNSIDILPELLEEVLLRLPTKSILKCRIVSKQWRSLLESSRFAERH). LRR repeat units follow at residues 112–135 (QDWI…LNHN) and 226–251 (VYRI…QITV).

The chain is F-box/LRR-repeat protein At2g43260 from Arabidopsis thaliana (Mouse-ear cress).